A 224-amino-acid chain; its full sequence is UPF0758 protein Avin_02940 (224 aa).

Positions 102–224 (ALESPQAVRD…PLSMAEQGWL (123 aa)) constitute an MPN domain. Zn(2+) is bound by residues histidine 173, histidine 175, and aspartate 186. The JAMM motif signature appears at 173–186 (HNHPSGIAEPSQAD).

The protein belongs to the UPF0758 family.

The chain is UPF0758 protein Avin_02940 from Azotobacter vinelandii (strain DJ / ATCC BAA-1303).